The sequence spans 92 residues: WAP four-disulfide core domain protein 12 (92 aa).

The N-terminal stretch at Met-1 to Gly-23 is a signal peptide. In terms of domain architecture, WAP spans Asn-27–Val-74. Disulfide bonds link Cys-34–Cys-62, Cys-41–Cys-66, Cys-49–Cys-61, and Cys-55–Cys-70.

The protein localises to the secreted. Its function is as follows. Antibacterial protein. Putative acid-stable proteinase inhibitor. The sequence is that of WAP four-disulfide core domain protein 12 (WFDC12) from Aotus nancymaae (Ma's night monkey).